A 179-amino-acid polypeptide reads, in one-letter code: Large ribosomal subunit protein uL5 (179 aa).

Belongs to the universal ribosomal protein uL5 family. As to quaternary structure, part of the 50S ribosomal subunit; part of the 5S rRNA/L5/L18/L25 subcomplex. Contacts the 5S rRNA and the P site tRNA. Forms a bridge to the 30S subunit in the 70S ribosome.

Its function is as follows. This is one of the proteins that bind and probably mediate the attachment of the 5S RNA into the large ribosomal subunit, where it forms part of the central protuberance. In the 70S ribosome it contacts protein S13 of the 30S subunit (bridge B1b), connecting the 2 subunits; this bridge is implicated in subunit movement. Contacts the P site tRNA; the 5S rRNA and some of its associated proteins might help stabilize positioning of ribosome-bound tRNAs. The chain is Large ribosomal subunit protein uL5 from Staphylococcus epidermidis (strain ATCC 35984 / DSM 28319 / BCRC 17069 / CCUG 31568 / BM 3577 / RP62A).